Consider the following 470-residue polypeptide: 5-hydroxytryptamine receptor 2A (470 aa).

Residues 1–80 (MDVLCEENTS…LQEKNWSALL (80 aa)) are Extracellular-facing. N8, N38, N44, N51, N54, and N75 each carry an N-linked (GlcNAc...) asparagine glycan. The helical transmembrane segment at 81 to 97 (TAVVIILTIAGNILVIM) threads the bilayer. The Cytoplasmic segment spans residues 98–111 (AVSLEKKLQNATNY). The helical transmembrane segment at 112–137 (FLMSLAIADMLLGFLVMPVSMLTILY) threads the bilayer. Over 138–146 (GYRWPLPSK) the chain is Extracellular. A helical transmembrane segment spans residues 147–171 (LCAVWIYLDVLFSTASIMHLCAISL). C148 and C227 form a disulfide bridge. Residue D155 participates in serotonin binding. Positions 172 to 174 (DRY) match the DRY motif; important for ligand-induced conformation changes motif. At 172–191 (DRYVAIQNPIHHRRFNSRTK) the chain is on the cytoplasmic side. Residues 192–215 (AFLKIIAVWTISVGISMPIPVFGL) form a helical membrane-spanning segment. The Extracellular portion of the chain corresponds to 216–232 (QDDSKVFKEGSCLLADD). A helical membrane pass occupies residues 233 to 258 (NFVLIGSFVSFFIPLTIMVITYFLTI). Over 259 to 321 (KSLQKEATLC…QSISNEQKAC (63 aa)) the chain is Cytoplasmic. Position 280 is a phosphoserine (S280). The chain crosses the membrane as a helical span at residues 322 to 347 (KVLGIVFFLFVVMWCPFFITNIMAVI). N342 provides a ligand contact to serotonin. A disulfide bridge connects residues C348 and C352. Residues 348–355 (CKESCNED) lie on the Extracellular side of the membrane. A helical transmembrane segment spans residues 356–381 (VIGALLNVFVWIGYLSSAVNPLVYTL). The NPxxY motif; important for ligand-induced conformation changes and signaling motif lies at 375 to 379 (NPLVY). Topologically, residues 382-470 (FNKTYRSAFS…NTVNEKVSCV (89 aa)) are cytoplasmic. The interval 448-470 (GKQHSEDAPADNSNTVNEKVSCV) is disordered. Residues 458–470 (DNSNTVNEKVSCV) are compositionally biased toward polar residues. The PDZ-binding motif lies at 468–470 (SCV).

This sequence belongs to the G-protein coupled receptor 1 family. As to quaternary structure, interacts (via C-terminus) with MPDZ and PATJ. May interact (via C-terminus) with MPP3, PRDX6, DLG4, DLG1, CASK, APBA1 and MAGI2. Interacts with GRM2 and DRD2; this may affect signaling.

The protein resides in the cell membrane. Its subcellular location is the cell projection. The protein localises to the dendrite. It is found in the axon. It localises to the cytoplasmic vesicle. The protein resides in the membrane. Its subcellular location is the caveola. The protein localises to the presynapse. G-protein coupled receptor activity is regulated by lipids: oleamide increases HTR2A-mediated activity. Its function is as follows. G-protein coupled receptor for 5-hydroxytryptamine (serotonin). Also functions as a receptor for various drugs and psychoactive substances, including mescaline, psilocybin, 1-(2,5-dimethoxy-4-iodophenyl)-2-aminopropane (DOI) and lysergic acid diethylamide (LSD). Ligand binding causes a conformation change that triggers signaling via guanine nucleotide-binding proteins (G proteins) and modulates the activity of downstream effectors. HTR2A is coupled to G(q)/G(11) G alpha proteins and activates phospholipase C-beta, releasing diacylglycerol (DAG) and inositol 1,4,5-trisphosphate (IP3) second messengers that modulate the activity of phosphatidylinositol 3-kinase and promote the release of Ca(2+) ions from intracellular stores, respectively. Beta-arrestin family members inhibit signaling via G proteins and mediate activation of alternative signaling pathways. Affects neural activity, perception, cognition and mood. Plays a role in the regulation of behavior, including responses to anxiogenic situations and psychoactive substances. Plays a role in intestinal smooth muscle contraction, and may play a role in arterial vasoconstriction. In Sus scrofa (Pig), this protein is 5-hydroxytryptamine receptor 2A (HTR2A).